A 336-amino-acid polypeptide reads, in one-letter code: Glyceraldehyde-3-phosphate dehydrogenase 1 (336 aa).

NAD(+) contacts are provided by residues 13 to 14 (RI) and D35. S59 bears the Phosphoserine mark. NAD(+) is bound at residue R80. Phosphoserine is present on S125. D-glyceraldehyde 3-phosphate is bound by residues 151-153 (SCT), T182, 211-212 (TG), and R234. The Nucleophile role is filled by C152. N316 contacts NAD(+).

It belongs to the glyceraldehyde-3-phosphate dehydrogenase family. As to quaternary structure, homotetramer.

The protein localises to the cytoplasm. The catalysed reaction is D-glyceraldehyde 3-phosphate + phosphate + NAD(+) = (2R)-3-phospho-glyceroyl phosphate + NADH + H(+). It functions in the pathway carbohydrate degradation; glycolysis; pyruvate from D-glyceraldehyde 3-phosphate: step 1/5. In Schizosaccharomyces pombe (strain 972 / ATCC 24843) (Fission yeast), this protein is Glyceraldehyde-3-phosphate dehydrogenase 1 (tdh1).